The following is a 347-amino-acid chain: Succinylglutamate desuccinylase (347 aa).

Positions 64, 67, and 159 each coordinate Zn(2+). Glu222 is an active-site residue.

Belongs to the AspA/AstE family. Succinylglutamate desuccinylase subfamily. It depends on Zn(2+) as a cofactor.

The catalysed reaction is N-succinyl-L-glutamate + H2O = L-glutamate + succinate. It functions in the pathway amino-acid degradation; L-arginine degradation via AST pathway; L-glutamate and succinate from L-arginine: step 5/5. Its function is as follows. Transforms N(2)-succinylglutamate into succinate and glutamate. The sequence is that of Succinylglutamate desuccinylase from Burkholderia cenocepacia (strain ATCC BAA-245 / DSM 16553 / LMG 16656 / NCTC 13227 / J2315 / CF5610) (Burkholderia cepacia (strain J2315)).